Consider the following 917-residue polypeptide: Dolichyl-phosphooligosaccharide-protein glycotransferase (917 aa).

Basic and acidic residues predominate over residues 1–10 (MTENNEKVKN). The disordered stretch occupies residues 1 to 20 (MTENNEKVKNSDSANNQSSK). The Cytoplasmic portion of the chain corresponds to 1–38 (MTENNEKVKNSDSANNQSSKNSKFNFNFEDKKVKCAKT). Over residues 11 to 20 (SDSANNQSSK) the composition is skewed to low complexity. The helical transmembrane segment at 39-59 (ILIIIFLAFLSFQMRAQTADM) threads the bilayer. The Extracellular segment spans residues 60–154 (GFTTNEQYLD…AMDSTVTLMN (95 aa)). The short motif at 82 to 84 (ALD) is the DXD motif 1 element. Aspartate 84 is a Mn(2+) binding site. Residues 155–175 (AAFWVPAILSMFLITPIFFTV) traverse the membrane as a helical segment. Residues 176–182 (RRITSSD) lie on the Cytoplasmic side of the membrane. Residues 183-203 (IGGAVAAILASLSPSIFVKTV) traverse the membrane as a helical segment. Over 204 to 209 (AGFSDT) the chain is Extracellular. Aspartate 208 is a binding site for Mn(2+). A DXD motif 2 motif is present at residues 208-210 (DTP). The helical transmembrane segment at 210-230 (PILEILPLLFIVWFIIEAIHY) threads the bilayer. Residues 231–237 (SKEKNYK) are Cytoplasmic-facing. Residues 238 to 260 (SLIYGLLATLMLALYPFMWSAWW) form a helical membrane-spanning segment. The Extracellular portion of the chain corresponds to 261-263 (YGY). The helical transmembrane segment at 264–286 (YIVIAFLVIYAIYKGISYNSIAK) threads the bilayer. Over 287–308 (YTKSKNNNHKDKIESEKLEMLN) the chain is Cytoplasmic. The chain crosses the membrane as a helical span at residues 309 to 329 (ILKISGLFIIGGAVLITALYG). The Extracellular segment spans residues 330–372 (VSTTMNALQAPLNYLGLDEVSSQTGWPNVLTTVSELDTASLDE). Residues 361–364 (TVSE) carry the TIXE motif motif. Mn(2+) is bound at residue glutamate 364. A helical membrane pass occupies residues 373–393 (IISSSLGSIHLFAIGLIGIFL). Topologically, residues 394–413 (SLFRKVLTPVKQISNGLAEK) are cytoplasmic. The chain crosses the membrane as a helical span at residues 414-434 (LDIKYALLLIIWFAVTFLAAS). Topologically, residues 435–438 (KGVR) are extracellular. Position 438 (arginine 438) interacts with a glycophospholipid. Residues 439–459 (FVALMVPPLSIGVGIFVGFIE) traverse the membrane as a helical segment. The Cytoplasmic segment spans residues 460 to 469 (QFIKNNLDKK). A helical membrane pass occupies residues 470-490 (YEYVAYPTIAIIVLYALFTIY). The Extracellular segment spans residues 491-506 (RADSADLVRMLLPSNY). The chain crosses the membrane as a helical span at residues 507 to 527 (VPIAEGIMLASLAVLIIYKVA). The Cytoplasmic portion of the chain corresponds to 528–541 (ELIAESNKKLVMNK). Residues 542–562 (IFMILLAIGLITPTIATIVPF) form a helical membrane-spanning segment. Residues 563–917 (YSVPTYNDGW…FSVDYGNYSK (355 aa)) are Extracellular-facing. Positions 592–594 (WWD) are interacts with target acceptor peptide in protein substrate. Residues 592–596 (WWDNG) carry the WWDYG motif motif. The MI motif motif lies at 719–726 (MTSIASVW).

It belongs to the STT3 family. The cofactor is Mn(2+). Mg(2+) serves as cofactor.

The protein resides in the cell membrane. The enzyme catalyses an archaeal dolichyl phosphooligosaccharide + [protein]-L-asparagine = an archaeal dolichyl phosphate + a glycoprotein with the oligosaccharide chain attached by N-beta-D-glycosyl linkage to a protein L-asparagine.. It functions in the pathway cell surface structure biogenesis; S-layer biogenesis. It participates in protein modification; protein glycosylation. Its function is as follows. Oligosaccharyl transferase (OST) that catalyzes the initial transfer of a defined glycan (ManNAcGlc-2,3-diNAcAGlcNAc in M.voltae) from the lipid carrier dolichol-monophosphate to an asparagine residue within an Asn-X-Ser/Thr consensus motif in nascent polypeptide chains, the first step in protein N-glycosylation. Involved in the assembly of an N-linked disaccharide that decorates the S-layer glycoprotein and flagellins. The sequence is that of Dolichyl-phosphooligosaccharide-protein glycotransferase from Methanococcus voltae.